A 188-amino-acid polypeptide reads, in one-letter code: Elongation factor P (188 aa).

The protein belongs to the elongation factor P family.

The protein localises to the cytoplasm. The protein operates within protein biosynthesis; polypeptide chain elongation. Functionally, involved in peptide bond synthesis. Stimulates efficient translation and peptide-bond synthesis on native or reconstituted 70S ribosomes in vitro. Probably functions indirectly by altering the affinity of the ribosome for aminoacyl-tRNA, thus increasing their reactivity as acceptors for peptidyl transferase. The protein is Elongation factor P of Wolbachia pipientis wMel.